A 380-amino-acid polypeptide reads, in one-letter code: Adaptive-response sensory kinase SasA (380 aa).

The kaiB-like domain, interacts with KaiC stretch occupies residues 20–101 (LLFVANRPGD…QKVDYWWPRW (82 aa)). A Histidine kinase domain is found at 157 to 380 (LLAHELRNPL…CFHFTLPVYS (224 aa)). Position 160 is a phosphohistidine; by autocatalysis (H160).

Homotrimer with a small amount of possible homohexamer; a protein fragment of 109-380 is also a homotrimer. Interacts with KaiC, probably as 1 SasA trimer:1 KaiC homohexamer; unphosphorylated SasA has the highest affinity. Homodimer. Binds to the B-loop in the CI domain of KaiC; SasA and KaiB(fs) compete to bind to the CI domain. Binds preferentially to doubly phosphorylated KaiC. In terms of processing, autophosphorylates, probably on His-160.

The enzyme catalyses ATP + protein L-histidine = ADP + protein N-phospho-L-histidine.. Its function is as follows. Member of the two-component regulatory system SasA/RpaA involved in genome-wide circadian gene expression. One of several clock output pathways. Participates in the Kai clock protein complex, the main circadian regulator in cyanobacteria, via its interaction with KaiC. KaiC enhances the autophosphorylation activity of SasA, which then transfers its phosphate group to RpaA to activate it. In addition to its output function, recruits fold-shifted KaiB (KaiB(fs)) to KaiC to cooperatively form the KaiB(6):KaiC(6) complex (independent of SasA kinase activity). Required for robustness of the circadian rhythm of gene expression and is involved in clock output, also required for adaptation to light/dark cycles. The chain is Adaptive-response sensory kinase SasA from Thermosynechococcus vestitus (strain NIES-2133 / IAM M-273 / BP-1).